The following is a 298-amino-acid chain: N-acetylmuramic acid 6-phosphate etherase 2 (298 aa).

An SIS domain is found at 51–214 (IVSRFEQGGR…STAAMVRLGR (164 aa)). Catalysis depends on glutamate 79, which acts as the Proton donor. Residue glutamate 110 is part of the active site.

This sequence belongs to the GCKR-like family. MurNAc-6-P etherase subfamily. In terms of assembly, homodimer.

The catalysed reaction is N-acetyl-D-muramate 6-phosphate + H2O = N-acetyl-D-glucosamine 6-phosphate + (R)-lactate. It functions in the pathway amino-sugar metabolism; N-acetylmuramate degradation. Specifically catalyzes the cleavage of the D-lactyl ether substituent of MurNAc 6-phosphate, producing GlcNAc 6-phosphate and D-lactate. This is N-acetylmuramic acid 6-phosphate etherase 2 from Bacillus licheniformis (strain ATCC 14580 / DSM 13 / JCM 2505 / CCUG 7422 / NBRC 12200 / NCIMB 9375 / NCTC 10341 / NRRL NRS-1264 / Gibson 46).